Reading from the N-terminus, the 184-residue chain is Protein OPG161 (184 aa).

Over 1–33 (MMTPENDEEQTSVFSATVYGDKIQGKNKRKRVI) the chain is Intravirion. Residues 34 to 56 (GICIRISMVISLLSMITMSAFLI) traverse the membrane as a helical segment. The Virion surface segment spans residues 57 to 184 (VRLNQCMSAN…RKYFCVKTMN (128 aa)). Residues 98-184 (SCNGLYYQGS…RKYFCVKTMN (87 aa)) form a C-type lectin-like domain region. Residue Asn-134 is glycosylated (N-linked (GlcNAc...) asparagine; by host).

It belongs to the orthopoxvirus OPG161 family. In terms of assembly, homodimer, disulfide-linked. Interacts with protein OPG190. Interacts (via C-terminus) with protein OPG164. Interacts with OPG162.

Its subcellular location is the virion membrane. The protein localises to the host membrane. Functionally, forms a complex with OPG162 and OPG190 to coordinate the incorporation of OPG164 into wrapped enveloped virion (EV) membranes and, subsequently, the production of actin tails. Therefore plays an essential role in efficient cell-to-cell spread of viral particles. The chain is Protein OPG161 (OPG161) from Homo sapiens (Human).